Here is a 354-residue protein sequence, read N- to C-terminus: Guanine nucleotide-binding protein G(i) subunit alpha-3 (354 aa).

Gly-2 is lipidated: N-myristoyl glycine. Residue Cys-3 is the site of S-palmitoyl cysteine attachment. In terms of domain architecture, G-alpha spans 32-354; the sequence is KEVKLLLLGA…KNNLKECGLY (323 aa). The tract at residues 35–48 is G1 motif; that stretch reads KLLLLGAGESGKST. Residues Gly-42, Glu-43, Ser-44, Gly-45, Lys-46, Ser-47, Thr-48, Asp-150, Ser-151, Leu-175, Arg-176, Thr-177, Arg-178, Val-179, Lys-180, Thr-181, Val-201, Gly-203, Asn-269, Lys-270, Asp-272, Leu-273, Cys-325, Ala-326, and Thr-327 each coordinate GTP. Ser-47 lines the Mg(2+) pocket. A G2 motif region spans residues 173-181; it reads DVLRTRVKT. Thr-181 serves as a coordination point for Mg(2+). Positions 196 to 205 are G3 motif; it reads FKMFDVGGQR. A G4 motif region spans residues 265–272; the sequence is ILFLNKKD. The interval 324–329 is G5 motif; that stretch reads TCATDT.

Belongs to the G-alpha family. G(i/o/t/z) subfamily. In terms of assembly, heterotrimeric G proteins are composed of 3 units; alpha, beta and gamma. The alpha subunit contains the guanine nucleotide binding site. GTP binding causes dissociation of the heterotrimer, liberating the individual subunits so that they can interact with downstream effector proteins. Forms a complex with CCDC88A/GIV and EGFR which leads to enhanced EGFR signaling and triggering of cell migration; ligand stimulation is required for recruitment of GNAI3 to the complex. Interacts (inactive GDP-bound form) with CCDC88A/GIV (via GBA motif); the interaction leads to activation of GNAI3. Interacts (inactive GDP-bound form) with CCDC88C/DAPLE (via GBA motif); the interaction leads to activation of GNAI3. Interacts (inactive GDP-bound form) with NUCB1 (via GBA motif) and NUCB2 (via GBA motif); the interaction leads to activation of GNAI3. Interacts (inactive GDP-bound form) with PLCD4 (via GBA motif); the interaction leads to activation of GNAI3. Interacts with INSR; the interaction is probably mediated by CCDC88A/GIV. Interacts with GPSM1. Interacts (GDP-bound form) with GPSM2 (via GoLoco domains). Does not interact with RGS2. Interacts with RGS8 and RGS10; this strongly enhances the intrinsic GTPase activity. Interacts with RGS16; this strongly enhances the intrinsic GTPase activity. Interacts with RGS12. Interacts (via active GTP- or inactive GDP-bound form) with RGS14. Interacts (via active GTP-bound form) with TRPC5 (via ANK repeats) in a homotetrameric ion channel; the interaction is direct and activates the channel activity.

The protein resides in the cytoplasm. It is found in the cell membrane. It localises to the cytoskeleton. The protein localises to the microtubule organizing center. Its subcellular location is the centrosome. In terms of biological role, heterotrimeric guanine nucleotide-binding proteins (G proteins) function as transducers downstream of G protein-coupled receptors (GPCRs) in numerous signaling cascades. The alpha chain contains the guanine nucleotide binding site and alternates between an active, GTP-bound state and an inactive, GDP-bound state. Signaling by an activated GPCR promotes GDP release and GTP binding. The alpha subunit has a low GTPase activity that converts bound GTP to GDP, thereby terminating the signal. Both GDP release and GTP hydrolysis are modulated by numerous regulatory proteins. Signaling is mediated via effector proteins, such as adenylate cyclase. Inhibits adenylate cyclase activity, leading to decreased intracellular cAMP levels. Stimulates the activity of receptor-regulated K(+) channels. The active GTP-bound form prevents the association of RGS14 with centrosomes and is required for the translocation of RGS14 from the cytoplasm to the plasma membrane. May play a role in cell division. The active GTP-bound form activates the calcium permeant TRPC5 ion channels. This chain is Guanine nucleotide-binding protein G(i) subunit alpha-3 (Gnai3), found in Mus musculus (Mouse).